The primary structure comprises 71 residues: Small integral membrane protein 31 (71 aa).

The helical transmembrane segment at 8 to 28 (LEMAFILLAFVIFSLFTLASI) threads the bilayer. The interval 31–71 (TPDDSNEEEEHEKKGREKKRKKSEKKKNCSEEEHRIEAVEL) is disordered. Residues 46–55 (REKKRKKSEK) show a composition bias toward basic residues. Residues 56–71 (KKNCSEEEHRIEAVEL) show a composition bias toward basic and acidic residues. N58 is a glycosylation site (N-linked (GlcNAc...) asparagine).

It localises to the membrane. The chain is Small integral membrane protein 31 from Homo sapiens (Human).